Reading from the N-terminus, the 24-residue chain is Grammistin Gs G (24 aa).

This sequence belongs to the grammistin family. Group 1 subfamily. In terms of assembly, exists as aggregates of 3-4 molecules. In terms of tissue distribution, expressed by the skin glands.

It localises to the secreted. Functionally, thanks to its abundant amphiphilic alpha-helices, it may integrate into membrane phospholipids, leading to lysis of the membrane. Its high hemolytic activity is inhibited by phospholipids, but not by cholesterol. Has antibacterial activity with a broad spectrum against various species of bacteria including both Gram-positive and Gram-negative groups. Also has high ichthyotoxic activity. This is Grammistin Gs G from Grammistes sexlineatus (Goldenstriped soapfish).